A 244-amino-acid polypeptide reads, in one-letter code: Mannose-binding protein C (244 aa).

Positions 1-18 (MSLFTSFLLLCVLTAVYA) are cleaved as a signal peptide. Positions 38–96 (GLNGFPGKDGHDGAKGEKGEPGQGLRGLQGPPGKVGPAGPPGNPGSKGATGPKGDRGES) constitute a Collagen-like domain. At proline 43 the chain carries 4-hydroxyproline. The disordered stretch occupies residues 43–99 (PGKDGHDGAKGEKGEPGQGLRGLQGPPGKVGPAGPPGNPGSKGATGPKGDRGESVEF). Residues 45–57 (KDGHDGAKGEKGE) are compositionally biased toward basic and acidic residues. 4-hydroxyproline occurs at positions 58, 69, 78, and 81. Positions 65-74 (LQGPPGKVGP) are enriched in low complexity. Residues 108 to 126 (IAALRSELRAMRKWVLLSM) are a coiled coil. Residues 129–241 (NVGKKYFMSS…CSDSFLVVCE (113 aa)) form the C-type lectin domain. Disulfide bonds link cysteine 151–cysteine 240 and cysteine 218–cysteine 232.

Oligomeric complex of 3 or more homotrimers. Interacts with MASP1 and MASP2. Interacts with MEP1A and MEP1B and may inhibit their catalytic activity.

The protein localises to the secreted. Calcium-dependent lectin involved in innate immune defense. Binds mannose, fucose and N-acetylglucosamine on different microorganisms and activates the lectin complement pathway. Binds to late apoptotic cells, as well as to apoptotic blebs and to necrotic cells, but not to early apoptotic cells, facilitating their uptake by macrophages. This is Mannose-binding protein C (Mbl2) from Rattus norvegicus (Rat).